The sequence spans 200 residues: Dephospho-CoA kinase (200 aa).

The DPCK domain occupies 4–200 (VIGLTGGIAS…AILKKWNIID (197 aa)). 12–17 (ASGKST) serves as a coordination point for ATP.

This sequence belongs to the CoaE family.

Its subcellular location is the cytoplasm. The enzyme catalyses 3'-dephospho-CoA + ATP = ADP + CoA + H(+). It participates in cofactor biosynthesis; coenzyme A biosynthesis; CoA from (R)-pantothenate: step 5/5. In terms of biological role, catalyzes the phosphorylation of the 3'-hydroxyl group of dephosphocoenzyme A to form coenzyme A. The chain is Dephospho-CoA kinase from Bacillus cereus (strain ZK / E33L).